The sequence spans 307 residues: Metapyrocatechase (307 aa).

VOC domains follow at residues 7–122 (RPGH…LYAD) and 150–269 (RFDH…VFCG). 3 residues coordinate Fe cation: H153, H214, and E265.

This sequence belongs to the extradiol ring-cleavage dioxygenase family. In terms of assembly, homotetramer. Fe(2+) is required as a cofactor.

It catalyses the reaction catechol + O2 = (2Z,4E)-2-hydroxy-6-oxohexa-2,4-dienoate + H(+). It participates in aromatic compound metabolism; benzoate degradation via hydroxylation. The protein is Metapyrocatechase (dmpB) of Pseudomonas sp. (strain CF600).